We begin with the raw amino-acid sequence, 566 residues long: Tissue-type plasminogen activator (566 aa).

A signal peptide spans 1-21 (MMSAMKTEFLCVLLLCGAVFT). Residues 22–33 (SPSQETYRRLRR) constitute a propeptide that is removed on maturation. Residues 34–36 (GAR) constitute a propeptide, removed by plasmin. A Fibronectin type-I domain is found at 40 to 82 (VTCRDGKTQMTYRQHDSWLRPLLRGNQVEHCWCDGGRAQCHSV). 17 cysteine pairs are disulfide-bonded: Cys42–Cys72, Cys70–Cys79, Cys87–Cys98, Cys92–Cys109, Cys111–Cys120, Cys128–Cys209, Cys149–Cys191, Cys180–Cys204, Cys219–Cys300, Cys240–Cys282, Cys271–Cys295, Cys303–Cys434, Cys346–Cys362, Cys354–Cys423, Cys448–Cys523, Cys480–Cys496, and Cys513–Cys541. An important for binding to annexin A2 region spans residues 43-53 (RDGKTQMTYRQ). The region spanning 83 to 121 (PVRSCSEPWCFNGGTCRQALYSSDFVCQCPEGFMGKLCE) is the EGF-like domain. Kringle domains lie at 128–209 (CYKD…TPAC) and 219–300 (CYTG…VPQC). An N-linked (GlcNAc...) asparagine glycan is attached at Asn153. Residues 315–565 (IKGGLFADIT…YLDWIRDNTR (251 aa)) enclose the Peptidase S1 domain. Residues His361 and Asp410 each act as charge relay system in the active site. N-linked (GlcNAc...) asparagine glycosylation is present at Asn487. The active-site Charge relay system is Ser517.

The protein belongs to the peptidase S1 family. In terms of assembly, heterodimer of chain A and chain B held by a disulfide bond. Binds to fibrin with high affinity. This interaction leads to an increase in the catalytic efficiency of the enzyme due to an increase in affinity for plasminogen. Similarly, binding to heparin increases the activation of plasminogen. Binds to annexin A2, cytokeratin-8, fibronectin and laminin. Binds to mannose receptor and the low-density lipoprotein receptor-related protein (LRP1); these proteins are involved in TPA clearance. Binds LRP1B; binding is followed by internalization and degradation. Forms heterodimer with SERPINA5. Interacts with SERPINE1. In complex with SERPINE1, interacts with SORL1. The single chain, almost fully active enzyme, can be further processed into a two-chain fully active form by a cleavage after Arg-314 catalyzed by plasmin, tissue kallikrein or factor Xa.

The protein localises to the secreted. It localises to the extracellular space. It carries out the reaction Specific cleavage of Arg-|-Val bond in plasminogen to form plasmin.. Inhibited by SERPINA5. Inhibited by SERPINE1. In terms of biological role, converts the abundant, but inactive, zymogen plasminogen to plasmin by hydrolyzing a single Arg-Val bond in plasminogen. By controlling plasmin-mediated proteolysis, it plays an important role in tissue remodeling and degradation, in cell migration and many other physiopathological events. During oocyte activation, plays a role in cortical granule reaction in the zona reaction, which contributes to the block to polyspermy. This is Tissue-type plasminogen activator (PLAT) from Bos taurus (Bovine).